The sequence spans 573 residues: O-fucosyltransferase 20 (573 aa).

Topologically, residues 1–60 are cytoplasmic; it reads MALSKNSNSNSFNKKKVSYISVPSQIINSLSSSSLQSLLVSPKKSSRSTNRFSFSYRNPR. A helical; Signal-anchor for type II membrane protein membrane pass occupies residues 61–81; it reads IWFFTLFLVSLFGMLKLGFNV. Topologically, residues 82–573 are lumenal; it reads DPISLPFSRY…RQQQEQQSDA (492 aa). Asn-138 carries an N-linked (GlcNAc...) asparagine glycan. Position 344 to 346 (344 to 346) interacts with substrate; sequence HLR. N-linked (GlcNAc...) asparagine glycans are attached at residues Asn-385 and Asn-517. Positions 547–556 are enriched in basic and acidic residues; the sequence is AGKDVTKHPV. Residues 547-573 form a disordered region; the sequence is AGKDVTKHPVPECMCSDRQQQEQQSDA. Positions 563–573 are enriched in polar residues; it reads DRQQQEQQSDA.

It belongs to the glycosyltransferase GT106 family. Interacts with RACK1A. Highly expressed in shoot apical meristem (SAM) and in young vegetative tissues.

The protein localises to the golgi apparatus membrane. The protein operates within glycan metabolism. In terms of biological role, may play a role in the biosynthesis of matrix polysaccharides and contribute to the biomechanics and development of the plant cell wall. The polypeptide is O-fucosyltransferase 20 (Arabidopsis thaliana (Mouse-ear cress)).